The primary structure comprises 180 residues: Shikimate kinase (180 aa).

15–20 (GAGKTT) lines the ATP pocket. Residue Thr-19 coordinates Mg(2+). Substrate-binding residues include Asp-37, Arg-61, and Gly-83. An ATP-binding site is contributed by Arg-121. Arg-140 provides a ligand contact to substrate.

This sequence belongs to the shikimate kinase family. In terms of assembly, monomer. Mg(2+) is required as a cofactor.

The protein resides in the cytoplasm. The enzyme catalyses shikimate + ATP = 3-phosphoshikimate + ADP + H(+). It participates in metabolic intermediate biosynthesis; chorismate biosynthesis; chorismate from D-erythrose 4-phosphate and phosphoenolpyruvate: step 5/7. Functionally, catalyzes the specific phosphorylation of the 3-hydroxyl group of shikimic acid using ATP as a cosubstrate. In Psychrobacter sp. (strain PRwf-1), this protein is Shikimate kinase.